A 357-amino-acid chain; its full sequence is 3-isopropylmalate dehydrogenase, chloroplastic (357 aa).

A chloroplast-targeting transit peptide spans methionine 1–threonine 29. Residues arginine 120, arginine 130, arginine 151, and aspartate 238 each contribute to the substrate site. 3 residues coordinate Mg(2+): aspartate 238, aspartate 262, and aspartate 266. Residue glycine 296–asparagine 308 coordinates NAD(+).

This sequence belongs to the isocitrate and isopropylmalate dehydrogenases family. Homodimer. It depends on Mg(2+) as a cofactor. Mn(2+) serves as cofactor.

The protein resides in the plastid. It is found in the chloroplast. The enzyme catalyses (2R,3S)-3-isopropylmalate + NAD(+) = 4-methyl-2-oxopentanoate + CO2 + NADH. It functions in the pathway amino-acid biosynthesis; L-leucine biosynthesis; L-leucine from 3-methyl-2-oxobutanoate: step 3/4. Its function is as follows. Catalyzes the oxidation of 3-carboxy-2-hydroxy-4-methylpentanoate (3-isopropylmalate) to 3-carboxy-4-methyl-2-oxopentanoate. The product decarboxylates to 4-methyl-2 oxopentanoate. The sequence is that of 3-isopropylmalate dehydrogenase, chloroplastic from Solanum tuberosum (Potato).